Consider the following 120-residue polypeptide: uncharacterized protein (120 aa).

Residues L93–L109 traverse the membrane as a helical segment.

Its subcellular location is the membrane. This is an uncharacterized protein from Saccharomyces cerevisiae (strain ATCC 204508 / S288c) (Baker's yeast).